The chain runs to 276 residues: Large ribosomal subunit protein uL2 (276 aa).

A disordered region spans residues 219–276 (TVRGSAMNPNDHPHGGGEGRSPIGRPSPVTPWGKPALGYKTRKKNKHSDKFIVTGRKR).

The protein belongs to the universal ribosomal protein uL2 family. As to quaternary structure, part of the 50S ribosomal subunit. Forms a bridge to the 30S subunit in the 70S ribosome.

Functionally, one of the primary rRNA binding proteins. Required for association of the 30S and 50S subunits to form the 70S ribosome, for tRNA binding and peptide bond formation. It has been suggested to have peptidyltransferase activity; this is somewhat controversial. Makes several contacts with the 16S rRNA in the 70S ribosome. The sequence is that of Large ribosomal subunit protein uL2 from Alkaliphilus metalliredigens (strain QYMF).